A 280-amino-acid chain; its full sequence is Chemotaxis protein methyltransferase 2 (280 aa).

A CheR-type methyltransferase domain is found at 10 to 280 (FGNQEFHYTR…SVGQTVYSPA (271 aa)). S-adenosyl-L-methionine-binding positions include Asn85, Thr87, Arg91, Glu125, Asp150, 208-209 (NL), and 226-227 (RN).

Interacts with the C-terminal pentapeptide GWEEF of the methyl-accepting chemotaxis protein McpB.

The enzyme catalyses L-glutamyl-[protein] + S-adenosyl-L-methionine = [protein]-L-glutamate 5-O-methyl ester + S-adenosyl-L-homocysteine. Its function is as follows. Methylation of the methyl-accepting chemotaxis proteins (MCP) to form gamma-glutamyl methyl ester residues in MCP. It specifically targets the McpB chemoreceptor. This Pseudomonas aeruginosa (strain ATCC 15692 / DSM 22644 / CIP 104116 / JCM 14847 / LMG 12228 / 1C / PRS 101 / PAO1) protein is Chemotaxis protein methyltransferase 2.